The chain runs to 256 residues: tRNA (guanine-N(7)-)-methyltransferase (256 aa).

S-adenosyl-L-methionine is bound by residues Glu85, Glu110, Asp137, and Asp159. The active site involves Asp159. Positions 163 and 195 each coordinate substrate.

The protein belongs to the class I-like SAM-binding methyltransferase superfamily. TrmB family.

The catalysed reaction is guanosine(46) in tRNA + S-adenosyl-L-methionine = N(7)-methylguanosine(46) in tRNA + S-adenosyl-L-homocysteine. It functions in the pathway tRNA modification; N(7)-methylguanine-tRNA biosynthesis. In terms of biological role, catalyzes the formation of N(7)-methylguanine at position 46 (m7G46) in tRNA. In Rhodopseudomonas palustris (strain BisB5), this protein is tRNA (guanine-N(7)-)-methyltransferase.